A 248-amino-acid polypeptide reads, in one-letter code: 2,3-bisphosphoglycerate-dependent phosphoglycerate mutase (248 aa).

Substrate is bound by residues 8-15, 21-22, arginine 60, 87-90, lysine 98, 114-115, and 183-184; these read RHGESLWN, TG, EKHY, RR, and GN. The active-site Tele-phosphohistidine intermediate is the histidine 9. Residue glutamate 87 is the Proton donor/acceptor of the active site.

The protein belongs to the phosphoglycerate mutase family. BPG-dependent PGAM subfamily.

It carries out the reaction (2R)-2-phosphoglycerate = (2R)-3-phosphoglycerate. It functions in the pathway carbohydrate degradation; glycolysis; pyruvate from D-glyceraldehyde 3-phosphate: step 3/5. In terms of biological role, catalyzes the interconversion of 2-phosphoglycerate and 3-phosphoglycerate. This Porphyromonas gingivalis (strain ATCC 33277 / DSM 20709 / CIP 103683 / JCM 12257 / NCTC 11834 / 2561) protein is 2,3-bisphosphoglycerate-dependent phosphoglycerate mutase.